Reading from the N-terminus, the 314-residue chain is Ribosomal RNA small subunit methyltransferase H (314 aa).

S-adenosyl-L-methionine-binding positions include 34 to 36 (GGH), aspartate 53, phenylalanine 82, aspartate 103, and glutamine 110.

The protein belongs to the methyltransferase superfamily. RsmH family.

It localises to the cytoplasm. The enzyme catalyses cytidine(1402) in 16S rRNA + S-adenosyl-L-methionine = N(4)-methylcytidine(1402) in 16S rRNA + S-adenosyl-L-homocysteine + H(+). Specifically methylates the N4 position of cytidine in position 1402 (C1402) of 16S rRNA. This is Ribosomal RNA small subunit methyltransferase H from Limosilactobacillus fermentum (strain NBRC 3956 / LMG 18251) (Lactobacillus fermentum).